Consider the following 114-residue polypeptide: MDLIKAVESQQMRKDLTPFNVGDTIRVHYKVIEGDRERIQPFEGIVIKKSGSGLRETFTVRRVSYGVGVERTFPLHSPRIEKIEVIRRGKVRRAKLYYLRKRVGKAATKIKELM.

Belongs to the bacterial ribosomal protein bL19 family.

Functionally, this protein is located at the 30S-50S ribosomal subunit interface and may play a role in the structure and function of the aminoacyl-tRNA binding site. In Thermoanaerobacter sp. (strain X514), this protein is Large ribosomal subunit protein bL19.